We begin with the raw amino-acid sequence, 312 residues long: uncharacterized protein (312 aa).

A run of 8 helical transmembrane segments spans residues 4–24, 45–65, 75–95, 117–137, 171–191, 217–237, 253–275, and 280–299; these read IFLAGLAAGFQTTWTLGKVIF, LITPVMGLFGLSGEAAIPLVL, IAGILTLDLSVKEVFILAVML, VILAVRIGLAAVSAIVINLIW, GLGVLQLAAIVIPLMIIIQFL, TSMTMVTGLTIGLAYGAGVMI, AFIFLVACHAVVEDTLVFIPLGI, and LLLIRVTTAVLLTMAIAHTW.

The protein localises to the cell membrane. This is an uncharacterized protein from Bacillus subtilis (strain 168).